Here is a 115-residue protein sequence, read N- to C-terminus: Peptidyl-tRNA hydrolase (115 aa).

Belongs to the PTH2 family.

It is found in the cytoplasm. It catalyses the reaction an N-acyl-L-alpha-aminoacyl-tRNA + H2O = an N-acyl-L-amino acid + a tRNA + H(+). The natural substrate for this enzyme may be peptidyl-tRNAs which drop off the ribosome during protein synthesis. The sequence is that of Peptidyl-tRNA hydrolase (pth) from Nanoarchaeum equitans (strain Kin4-M).